Reading from the N-terminus, the 572-residue chain is Proline--tRNA ligase (572 aa).

The protein belongs to the class-II aminoacyl-tRNA synthetase family. ProS type 1 subfamily. In terms of assembly, homodimer.

Its subcellular location is the cytoplasm. It carries out the reaction tRNA(Pro) + L-proline + ATP = L-prolyl-tRNA(Pro) + AMP + diphosphate. In terms of biological role, catalyzes the attachment of proline to tRNA(Pro) in a two-step reaction: proline is first activated by ATP to form Pro-AMP and then transferred to the acceptor end of tRNA(Pro). As ProRS can inadvertently accommodate and process non-cognate amino acids such as alanine and cysteine, to avoid such errors it has two additional distinct editing activities against alanine. One activity is designated as 'pretransfer' editing and involves the tRNA(Pro)-independent hydrolysis of activated Ala-AMP. The other activity is designated 'posttransfer' editing and involves deacylation of mischarged Ala-tRNA(Pro). The misacylated Cys-tRNA(Pro) is not edited by ProRS. This Dichelobacter nodosus (strain VCS1703A) protein is Proline--tRNA ligase.